The chain runs to 197 residues: Putative sulfur carrier protein aq_1421 (197 aa).

The Cysteine persulfide intermediate role is filled by Cys-17.

The protein belongs to the sulfur carrier protein TusA family.

The chain is Putative sulfur carrier protein aq_1421 from Aquifex aeolicus (strain VF5).